An 82-amino-acid polypeptide reads, in one-letter code: Conotoxin Tx6.6 (82 aa).

A signal peptide spans 1-19; it reads MKLTCVMIVAVLFLTAWTL. The propeptide occupies 20–51; sequence VMADDSNNGLANLFSKLRDEMEDPEGSKLEKK. Cystine bridges form between cysteine 53–cysteine 71, cysteine 60–cysteine 76, and cysteine 70–cysteine 81. An Alanine amide; partial modification is found at alanine 82.

Belongs to the O1 superfamily. In terms of tissue distribution, expressed by the venom duct.

The protein localises to the secreted. Omega-conotoxins act at presynaptic membranes, they bind and block voltage-gated calcium channels (Cav). This chain is Conotoxin Tx6.6, found in Conus textile (Cloth-of-gold cone).